We begin with the raw amino-acid sequence, 72 residues long: Translation initiation factor IF-1 (72 aa).

The region spanning 1 to 72 is the S1-like domain; sequence MAKDDVIEIE…TKGRITYRFK (72 aa).

It belongs to the IF-1 family. Component of the 30S ribosomal translation pre-initiation complex which assembles on the 30S ribosome in the order IF-2 and IF-3, IF-1 and N-formylmethionyl-tRNA(fMet); mRNA recruitment can occur at any time during PIC assembly.

It is found in the cytoplasm. One of the essential components for the initiation of protein synthesis. Stabilizes the binding of IF-2 and IF-3 on the 30S subunit to which N-formylmethionyl-tRNA(fMet) subsequently binds. Helps modulate mRNA selection, yielding the 30S pre-initiation complex (PIC). Upon addition of the 50S ribosomal subunit IF-1, IF-2 and IF-3 are released leaving the mature 70S translation initiation complex. This chain is Translation initiation factor IF-1, found in Ligilactobacillus salivarius (strain UCC118) (Lactobacillus salivarius).